Here is a 215-residue protein sequence, read N- to C-terminus: uncharacterized protein (215 aa).

Residues 98–119 (AAALAVAVASLCVCTLLLTHIV) form a helical membrane-spanning segment.

The protein resides in the membrane. This is an uncharacterized protein from Treponema pallidum (strain Nichols).